A 437-amino-acid chain; its full sequence is Inactive peptidyl-prolyl cis-trans isomerase shutdown (437 aa).

In terms of domain architecture, PPIase FKBP-type spans Asp-92–Val-178. TPR repeat units lie at residues Val-209–Ser-242, Val-258–Cys-294, and Lys-295–Asn-327.

It belongs to the FKBP6 family. Interacts with Hsp83.

It localises to the cytoplasm. Co-chaperone required during oogenesis to repress transposable elements and prevent their mobilization, which is essential for the germline integrity. Acts via the piRNA metabolic process, which mediates the repression of transposable elements during meiosis by forming complexes composed of piRNAs and Piwi proteins and govern the methylation and subsequent repression of transposons. Acts as a co-chaperone via its interaction with Hsp83/HSP90 and is required for the biogenesis of all three piRNA major populations. This chain is Inactive peptidyl-prolyl cis-trans isomerase shutdown (shu), found in Bombyx mori (Silk moth).